We begin with the raw amino-acid sequence, 1170 residues long: Thrombospondin-1 (1170 aa).

The signal sequence occupies residues 1-18 (MELLRGLGVLFLLHMCGS). The segment at 47-95 (RLVKGQDLSSPAFRIENANLIPAVPDDKFQDLLDAVWADKGFIFLASLR) is heparin-binding. The Laminin G-like domain maps to 56-270 (SPAFRIENAN…HKTKDLQAIC (215 aa)). A disulfide bridge connects residues Cys-171 and Cys-232. Residues Asn-248 and Asn-360 are each glycosylated (N-linked (GlcNAc...) asparagine). The 58-residue stretch at 316-373 (PLCFHNGVQYKNNEEWTVDSCTECHCQNSVTICKKVSCPIMPCSNATVPDGECCPRCW) folds into the VWFC domain. 3 TSP type-1 domains span residues 379-429 (DDGW…QECD), 435-490 (DGGW…DACP), and 492-547 (NGGW…QDCP). Trp-385 carries a C-linked (Man) tryptophan glycan. Disulfide bonds link Cys-391–Cys-423, Cys-395–Cys-428, and Cys-406–Cys-413. C-linked (Man) tryptophan glycans are attached at residues Trp-438 and Trp-441. 3 disulfide bridges follow: Cys-447–Cys-484, Cys-451–Cys-489, and Cys-462–Cys-474. The O-linked (Fuc...) threonine glycan is linked to Thr-450. A C-linked (Man) tryptophan glycan is attached at Trp-498. Intrachain disulfides connect Cys-504-Cys-541, Cys-508-Cys-546, Cys-519-Cys-531, Cys-551-Cys-562, Cys-556-Cys-572, Cys-575-Cys-586, Cys-592-Cys-608, Cys-599-Cys-617, Cys-620-Cys-644, Cys-650-Cys-663, Cys-657-Cys-676, Cys-678-Cys-689, Cys-705-Cys-713, Cys-718-Cys-738, Cys-754-Cys-774, Cys-777-Cys-797, Cys-813-Cys-833, Cys-836-Cys-856, Cys-874-Cys-894, Cys-910-Cys-930, and Cys-946-Cys-1167. Residue Thr-507 is glycosylated (O-linked (Fuc...) threonine). The interval 531–1152 (CVGDVTENQV…YAGGRLGLFV (622 aa)) is involved in retention in extracellular matrix (ECM); involved in trimer formation. The EGF-like 1 domain maps to 547–587 (PIDGCLSNPCFAGAKCTSYPDGSWKCGACPPGYSGNGIQCK). O-linked (Xyl) serine glycosylation is present at Ser-553. In terms of domain architecture, EGF-like 2 spans 646–690 (PRNPCTDGTHDCNKNAKCNYLGHYSDPMYRCECKPGYAGNGIICG). 8 TSP type-3 repeats span residues 691-726 (EDTD…NSGQ), 727-762 (EDYD…NPAQ), 763-785 (YDYD…NPDQ), 786-821 (ADTD…NVDQ), 822-844 (RDTD…NPDQ), 845-882 (LDSD…NANQ), 883-918 (ADHD…NPDQ), and 919-954 (KDSD…DISE). Residue Asn-708 is glycosylated (N-linked (GlcNAc...) asparagine). Positions 840–934 (HNPDQLDSDS…GRGDACKDDF (95 aa)) are disordered. Composition is skewed to basic and acidic residues over residues 883-894 (ADHDKDGKGDAC) and 917-934 (DQKD…KDDF). Residues 926-928 (RGD) carry the Cell attachment site motif. The TSP C-terminal domain occupies 958 to 1170 (RRFQMIPLDP…SDMKYECRDS (213 aa)). The N-linked (GlcNAc...) asparagine glycan is linked to Asn-1067.

The protein belongs to the thrombospondin family. As to quaternary structure, homotrimer; disulfide-linked. Can bind to fibrinogen, fibronectin, laminin, type V collagen and integrins alpha-V/beta-1, alpha-V/beta-3 and alpha-IIb/beta-3. Binds heparin. Interacts (via the C-terminal domain) with CD47. Interacts (via the TSP type I repeats) with CD36; the interaction conveys an antiangiogenic effect. Interacts (via the TSP type I repeats) with HRG; the interaction blocks the antiangiogenic effect of THBS1 with CD36. Interacts with ATF6 (via lumenal domain). Interacts with FN1; this interaction is enhanced by TNFAIP6, which may act as a bridging molecule between FN1 and THBS1. Interacts with SIRPA; the interaction stimulates phosphorylation of SIRPA.

It localises to the secreted. Its subcellular location is the cell surface. It is found in the extracellular space. The protein localises to the extracellular matrix. The protein resides in the endoplasmic reticulum. It localises to the sarcoplasmic reticulum. Its function is as follows. Adhesive glycoprotein that mediates cell-to-cell and cell-to-matrix interactions. Multifunctional, involved in inflammation, angiogenesis, wound healing, reactive oxygen species (ROS) signaling, nitrous oxide (NO) signaling, apoptosis, senescence, aging, cellular self-renewal, stemness, and cardiovascular and metabolic homeostasis. Negatively modulates dendritic cell activation and cytokine release, as part of an autocrine feedback loop, contributing to the resolution of inflammation and immune homeostasis. Ligand for receptor CD47. Modulates nitrous oxide (NO) signaling via CD47, hence playing a role as a pressor agent, supporting blood pressure. Plays a role in endothelial cell senescence, acting via CD47, by increasing the abundance and activation of NADPH oxidase NOX1, and so generating excess ROS. Inhibits stem cell self-renewal, acting via CD47 signaling, probably by regulation of the stem cell transcription factors POU5F1/OCT4, SOX2, MYC/c-Myc and KLF4. Negatively modulates wound healing, acting via CD47. Ligand for receptor CD36. Involved in inducing apoptosis in podocytes in response to elevated free fatty acids, acting via CD36. Plays a role in suppressing angiogenesis, acting, depending on context, via CD36 or CD47. Promotes cellular senescence in a TP53-CDKN1A-RB1 signaling-dependent manner. Ligand for immunoglobulin-like cell surface receptor SIRPA. Involved in ROS signaling in non-phagocytic cells, stimulating NADPH oxidase-derived ROS production, acting via interaction with SIRPA. Plays a role in metabolic dysfunction in diet-induced obesity, perhaps acting by exacerbating adipose inflammatory activity; its effects may be mediated, at least in part, through enhanced adipocyte proliferation. Plays a role in ER stress response, via its interaction with the activating transcription factor 6 alpha (ATF6) which produces adaptive ER stress response factors. May be involved in age-related conditions, including metabolic dysregulation, during normal aging. The protein is Thrombospondin-1 (Thbs1) of Mus musculus (Mouse).